Reading from the N-terminus, the 530-residue chain is 2,3-bisphosphoglycerate-independent phosphoglycerate mutase (530 aa).

2 residues coordinate Mn(2+): D15 and S65. S65 serves as the catalytic Phosphoserine intermediate. Substrate-binding positions include H126, R155–D156, R187, R193, R257–R260, and K330. D397, H401, D438, H439, and H456 together coordinate Mn(2+).

The protein belongs to the BPG-independent phosphoglycerate mutase family. Monomer. Requires Mn(2+) as cofactor.

It carries out the reaction (2R)-2-phosphoglycerate = (2R)-3-phosphoglycerate. The protein operates within carbohydrate degradation; glycolysis; pyruvate from D-glyceraldehyde 3-phosphate: step 3/5. Functionally, catalyzes the interconversion of 2-phosphoglycerate and 3-phosphoglycerate. This chain is 2,3-bisphosphoglycerate-independent phosphoglycerate mutase, found in Synechococcus sp. (strain JA-2-3B'a(2-13)) (Cyanobacteria bacterium Yellowstone B-Prime).